The sequence spans 1262 residues: Zinc finger protein 592 (1262 aa).

The segment at 23-45 (SLDAKEAIQAPSEENESPLKSSG) is disordered. Phosphoserine is present on residues Ser78, Ser142, Ser145, and Ser146. Disordered stretches follow at residues 122–174 (SFTS…PPPG), 200–278 (KKEP…AHSK), and 294–494 (VANV…ASTP). Residues Lys200 and Lys204 each participate in a glycyl lysine isopeptide (Lys-Gly) (interchain with G-Cter in SUMO2) cross-link. 2 stretches are compositionally biased toward basic and acidic residues: residues 213–232 (QQEHEQGGQKVVEPHKDLDS) and 298–308 (TKEDQPGHTKD). A compositionally biased stretch (low complexity) spans 343-367 (PSDSPRSICSDSSSKGSPSVAASSP). Polar residues predominate over residues 454–463 (IKTSDSSSPC). Residues 484–494 (QQSTAPQASTP) are compositionally biased toward low complexity. Ser529 carries the post-translational modification Phosphoserine. Lys546 participates in a covalent cross-link: Glycyl lysine isopeptide (Lys-Gly) (interchain with G-Cter in SUMO2). Residue Ser573 is modified to Phosphoserine. A C2H2-type 1; atypical zinc finger spans residues 587–612 (YCCLECGDAFALEKSLSQHYSRRSVH). The segment at 615 to 639 (VLCTLCSKTLLFFNKCSLLRHARDH) adopts a C2H2-type 2; atypical zinc-finger fold. The residue at position 691 (Ser691) is a Phosphoserine. Residues 711 to 731 (TKCPECHKQMRDYMVLATHFQ) form a C2H2-type 3; degenerate zinc finger. The segment at 740–764 (LTCQVCQMLLPNQCSFCAHQRIHAH) adopts a C2H2-type 4 zinc-finger fold. Residues 768–790 (YCCPECGVLCRSAYFQTHVKENC) form a C2H2-type 5; atypical zinc finger. 3 C2H2-type zinc fingers span residues 799 to 822 (YRCIHCGVIHLTLALLKSHIQERH), 827 to 850 (HKCAFCPMAFKTASSTMDHSTTQH), and 892 to 915 (FKCPECPLLFLQKPELMQHVKNTH). Low complexity predominate over residues 924–935 (LSSLQSSTDTSS). Residues 924–979 (LSSLQSSTDTSSNRPGSRAPAEPPATNVAARGSSLTAGRWGRPEAHRRAEARPRMR) are disordered. Residues 964 to 976 (GRPEAHRRAEARP) show a composition bias toward basic and acidic residues. 2 consecutive C2H2-type zinc fingers follow at residues 983-1006 (WTCQECQEWVPDRESYVSHMKKSH) and 1013-1036 (YPCRQCEQSFHNPSSLRKHIRNNH). The C2H2-type 11; atypical zinc finger occupies 1043 to 1069 (YTCGYCTEDSPSFPRPSLLESHISLMH). Ser1089 carries the phosphoserine modification. The C2H2-type 12; atypical zinc-finger motif lies at 1124–1146 (FQCAKCTFATDSELEFQSHIPQH). The C2H2-type 13 zinc finger occupies 1153-1176 (AQCLLCGLCYTSTSSLNRHLFIVH). 2 positions are modified to phosphoserine: Ser1198 and Ser1202. The tract at residues 1222 to 1262 (PLVTDLGGQQGLALDEDSAQDPQNQPQASQDQNSHALSPQV) is disordered. Polar residues predominate over residues 1241–1262 (QDPQNQPQASQDQNSHALSPQV).

This sequence belongs to the krueppel C2H2-type zinc-finger protein family. In terms of assembly, interacts with ZMYND8. In terms of tissue distribution, expressed in the brain.

It is found in the nucleus. May be involved in transcriptional regulation. In Mus musculus (Mouse), this protein is Zinc finger protein 592 (Znf592).